Reading from the N-terminus, the 300-residue chain is Bifunctional protein FolD (300 aa).

NADP(+) is bound by residues 172–174 (GRS), Ser-206, and Ile-247.

This sequence belongs to the tetrahydrofolate dehydrogenase/cyclohydrolase family. Homodimer.

It carries out the reaction (6R)-5,10-methylene-5,6,7,8-tetrahydrofolate + NADP(+) = (6R)-5,10-methenyltetrahydrofolate + NADPH. The catalysed reaction is (6R)-5,10-methenyltetrahydrofolate + H2O = (6R)-10-formyltetrahydrofolate + H(+). It functions in the pathway one-carbon metabolism; tetrahydrofolate interconversion. In terms of biological role, catalyzes the oxidation of 5,10-methylenetetrahydrofolate to 5,10-methenyltetrahydrofolate and then the hydrolysis of 5,10-methenyltetrahydrofolate to 10-formyltetrahydrofolate. This is Bifunctional protein FolD from Rhodopirellula baltica (strain DSM 10527 / NCIMB 13988 / SH1).